A 441-amino-acid chain; its full sequence is Ribosomal protein uS12 methylthiotransferase RimO (441 aa).

In terms of domain architecture, MTTase N-terminal spans 8–118; it reads PKIGFVSLGC…VLQHVHHYVP (111 aa). [4Fe-4S] cluster is bound by residues cysteine 17, cysteine 53, cysteine 82, cysteine 150, cysteine 154, and cysteine 157. The Radical SAM core domain occupies 136–373; sequence LTPRHYAYLK…MQLQQQISAE (238 aa). Positions 376-441 constitute a TRAM domain; the sequence is QEKVGREILV…DEYDLWGSRV (66 aa).

Belongs to the methylthiotransferase family. RimO subfamily. The cofactor is [4Fe-4S] cluster.

The protein resides in the cytoplasm. The enzyme catalyses L-aspartate(89)-[ribosomal protein uS12]-hydrogen + (sulfur carrier)-SH + AH2 + 2 S-adenosyl-L-methionine = 3-methylsulfanyl-L-aspartate(89)-[ribosomal protein uS12]-hydrogen + (sulfur carrier)-H + 5'-deoxyadenosine + L-methionine + A + S-adenosyl-L-homocysteine + 2 H(+). Its function is as follows. Catalyzes the methylthiolation of an aspartic acid residue of ribosomal protein uS12. The polypeptide is Ribosomal protein uS12 methylthiotransferase RimO (Salmonella typhi).